We begin with the raw amino-acid sequence, 271 residues long: Formamidopyrimidine-DNA glycosylase (271 aa).

Pro2 (schiff-base intermediate with DNA) is an active-site residue. Glu3 acts as the Proton donor in catalysis. Lys58 serves as the catalytic Proton donor; for beta-elimination activity. DNA contacts are provided by His91, Arg110, and Arg152. Residues 237–271 (WVYGRAGQSCRQCGELVSKTRQGQRSTFFCARCQH) form an FPG-type zinc finger. Arg261 serves as the catalytic Proton donor; for delta-elimination activity.

Belongs to the FPG family. As to quaternary structure, monomer. Zn(2+) is required as a cofactor.

It carries out the reaction Hydrolysis of DNA containing ring-opened 7-methylguanine residues, releasing 2,6-diamino-4-hydroxy-5-(N-methyl)formamidopyrimidine.. The catalysed reaction is 2'-deoxyribonucleotide-(2'-deoxyribose 5'-phosphate)-2'-deoxyribonucleotide-DNA = a 3'-end 2'-deoxyribonucleotide-(2,3-dehydro-2,3-deoxyribose 5'-phosphate)-DNA + a 5'-end 5'-phospho-2'-deoxyribonucleoside-DNA + H(+). In terms of biological role, involved in base excision repair of DNA damaged by oxidation or by mutagenic agents. Acts as a DNA glycosylase that recognizes and removes damaged bases. Has a preference for oxidized purines, such as 7,8-dihydro-8-oxoguanine (8-oxoG). Has AP (apurinic/apyrimidinic) lyase activity and introduces nicks in the DNA strand. Cleaves the DNA backbone by beta-delta elimination to generate a single-strand break at the site of the removed base with both 3'- and 5'-phosphates. The sequence is that of Formamidopyrimidine-DNA glycosylase from Nitrosomonas europaea (strain ATCC 19718 / CIP 103999 / KCTC 2705 / NBRC 14298).